The sequence spans 147 residues: uncharacterized protein (147 aa).

The region spanning 7–147 is the N-acetyltransferase domain; it reads LEINYKTDEL…GHDVLVWAPK (141 aa).

This is an uncharacterized protein from Staphylococcus haemolyticus (strain JCSC1435).